Here is a 254-residue protein sequence, read N- to C-terminus: Flagellar L-ring protein 1 (254 aa).

A signal peptide spans 1 to 26 (MSPFSSAFRPRRIAISALLLAIGALA).

The protein belongs to the FlgH family. As to quaternary structure, the basal body constitutes a major portion of the flagellar organelle and consists of four rings (L,P,S, and M) mounted on a central rod.

It is found in the cell outer membrane. The protein resides in the bacterial flagellum basal body. Functionally, assembles around the rod to form the L-ring and probably protects the motor/basal body from shearing forces during rotation. The chain is Flagellar L-ring protein 1 (flgH1) from Bradyrhizobium diazoefficiens (strain JCM 10833 / BCRC 13528 / IAM 13628 / NBRC 14792 / USDA 110).